A 651-amino-acid chain; its full sequence is UvrABC system protein C (651 aa).

The 78-residue stretch at 20 to 97 (ERCGVYRMFD…IKKFQPKFNI (78 aa)) folds into the GIY-YIG domain. A UVR domain is found at 207-242 (KALQENLSKKMEELSSQMRFEEAAEIRDRIKALSYV).

It belongs to the UvrC family. In terms of assembly, interacts with UvrB in an incision complex.

It localises to the cytoplasm. In terms of biological role, the UvrABC repair system catalyzes the recognition and processing of DNA lesions. UvrC both incises the 5' and 3' sides of the lesion. The N-terminal half is responsible for the 3' incision and the C-terminal half is responsible for the 5' incision. In Rickettsia akari (strain Hartford), this protein is UvrABC system protein C.